The chain runs to 155 residues: Cyanate hydratase (155 aa).

Active-site residues include Arg-101, Glu-104, and Ser-127.

It belongs to the cyanase family.

It carries out the reaction cyanate + hydrogencarbonate + 3 H(+) = NH4(+) + 2 CO2. In terms of biological role, catalyzes the reaction of cyanate with bicarbonate to produce ammonia and carbon dioxide. This is Cyanate hydratase from Coccidioides posadasii (strain C735) (Valley fever fungus).